We begin with the raw amino-acid sequence, 144 residues long: Large ribosomal subunit protein uL11 (144 aa).

It belongs to the universal ribosomal protein uL11 family. As to quaternary structure, part of the ribosomal stalk of the 50S ribosomal subunit. Interacts with L10 and the large rRNA to form the base of the stalk. L10 forms an elongated spine to which L12 dimers bind in a sequential fashion forming a multimeric L10(L12)X complex. One or more lysine residues are methylated.

Its function is as follows. Forms part of the ribosomal stalk which helps the ribosome interact with GTP-bound translation factors. This chain is Large ribosomal subunit protein uL11, found in Neisseria meningitidis serogroup A / serotype 4A (strain DSM 15465 / Z2491).